Consider the following 109-residue polypeptide: Cytochrome c (109 aa).

Heme c contacts are provided by Cys25, Cys28, His29, and Met88.

It belongs to the cytochrome c family. Post-translationally, binds 1 heme c group covalently per subunit.

The protein resides in the mitochondrion intermembrane space. Electron carrier protein. The oxidized form of the cytochrome c heme group can accept an electron from the heme group of the cytochrome c1 subunit of cytochrome reductase. Cytochrome c then transfers this electron to the cytochrome oxidase complex, the final protein carrier in the mitochondrial electron-transport chain. This is Cytochrome c from Tetrahymena pyriformis.